The sequence spans 634 residues: Chaperone protein HtpG (634 aa).

Residues 1–343 are a; substrate-binding; that stretch reads MTEAENRVTL…SDSLPLNVSR (343 aa). The interval 344–560 is b; the sequence is EILQENKQLE…SYGMSRTMER (217 aa). Positions 561 to 634 are c; sequence IMKSAGQNIP…KLNGLLQSLL (74 aa).

Belongs to the heat shock protein 90 family. As to quaternary structure, homodimer.

It localises to the cytoplasm. Molecular chaperone. Has ATPase activity. The chain is Chaperone protein HtpG from Methylococcus capsulatus (strain ATCC 33009 / NCIMB 11132 / Bath).